We begin with the raw amino-acid sequence, 47 residues long: Turripeptide Ici9.1 (47 aa).

Intrachain disulfides connect cysteine 1–cysteine 31, cysteine 5–cysteine 24, and cysteine 13–cysteine 45. The Kazal-like domain occupies 1-47 (CLSVCSMEYWPVCGSDGKTYPNECHLTSEACMSNTDITVAHVGKCDQ).

This sequence belongs to the conopeptide P-like superfamily. As to expression, expressed by the venom duct.

It localises to the secreted. Functionally, acts as a neurotoxin by inhibiting an ion channel. May also act as a serine protease inhibitor, since it possess the kazal serine protease inhibitor signature. The protein is Turripeptide Ici9.1 of Iotyrris cingulifera (Sea snail).